The sequence spans 348 residues: ELAV-like protein 3 (348 aa).

RRM domains are found at residues 34 to 112 (TNLI…YARP), 120 to 200 (ANLY…FANN), and 265 to 343 (WCIF…FKTS).

Belongs to the RRM elav family. Expression is neural-specific in both embryos and adults. Expressed from neurula stage onwards in primary motor-, inter- and sensory-neurons. Expressed in the closing neural tube and motor neurons of stage 18 embryos, and primarily in the ventricular zone and dorsal region of the tailbud and adult brain. Expressed from stage 26 onwards in the differentiating ganglion cell layer of the retina, extending to the inner nuclear layer at later stages.

In terms of biological role, RNA-binding protein that binds to AU-rich element (ARE) sequences of target mRNAs. May also bind poly-A tracts via RRM 3. May be involved in neuronal differentiation and maintenance. This Xenopus laevis (African clawed frog) protein is ELAV-like protein 3 (elavl3).